The sequence spans 331 residues: Ketol-acid reductoisomerase (NADP(+)) (331 aa).

Residues 2-182 (AQLFYDSDAD…GGTRAGILET (181 aa)) enclose the KARI N-terminal Rossmann domain. Residues 25-28 (YGSQ), serine 51, serine 53, and 83-86 (DEFQ) contribute to the NADP(+) site. Histidine 108 is a catalytic residue. Glycine 134 lines the NADP(+) pocket. The KARI C-terminal knotted domain maps to 183 to 328 (NFKEETETDL…KGLRSMFSWL (146 aa)). The Mg(2+) site is built by aspartate 191, glutamate 195, glutamate 227, and glutamate 231. Substrate is bound at residue serine 252.

Belongs to the ketol-acid reductoisomerase family. Mg(2+) serves as cofactor.

It catalyses the reaction (2R)-2,3-dihydroxy-3-methylbutanoate + NADP(+) = (2S)-2-acetolactate + NADPH + H(+). It carries out the reaction (2R,3R)-2,3-dihydroxy-3-methylpentanoate + NADP(+) = (S)-2-ethyl-2-hydroxy-3-oxobutanoate + NADPH + H(+). Its pathway is amino-acid biosynthesis; L-isoleucine biosynthesis; L-isoleucine from 2-oxobutanoate: step 2/4. The protein operates within amino-acid biosynthesis; L-valine biosynthesis; L-valine from pyruvate: step 2/4. Involved in the biosynthesis of branched-chain amino acids (BCAA). Catalyzes an alkyl-migration followed by a ketol-acid reduction of (S)-2-acetolactate (S2AL) to yield (R)-2,3-dihydroxy-isovalerate. In the isomerase reaction, S2AL is rearranged via a Mg-dependent methyl migration to produce 3-hydroxy-3-methyl-2-ketobutyrate (HMKB). In the reductase reaction, this 2-ketoacid undergoes a metal-dependent reduction by NADPH to yield (R)-2,3-dihydroxy-isovalerate. The chain is Ketol-acid reductoisomerase (NADP(+)) from Synechococcus sp. (strain CC9605).